The chain runs to 2314 residues: Protein Ycf2 (2314 aa).

1653-1660 (GSIGTGRS) serves as a coordination point for ATP.

Belongs to the Ycf2 family.

It is found in the plastid. The protein localises to the chloroplast stroma. In terms of biological role, probable ATPase of unknown function. Its presence in a non-photosynthetic plant (Epifagus virginiana) and experiments in tobacco indicate that it has an essential function which is probably not related to photosynthesis. The protein is Protein Ycf2 of Piper cenocladum (Ant piper).